We begin with the raw amino-acid sequence, 411 residues long: MYTPEAIGTPLTPSSLKVLLLGASELGRELAIALQRLGIEVHAADRYAGAPAHLVANKAHVLDIHDEDAIRQLVREVGPHFVIPDSETIPAEVLQEIETNEVASVVPTALANRLTMNREGIRTFAHDKLGLPNSTFRFASTADELARAAEEIGYPCVVKPVMSSSGAGQSYVGGVDELEAAWNAALKHSRTNAQRVMVEQYIPFDYEVTILAVRSIDPATGREATWFCEPIGHRQDRGDYVESWQPAHMSEDALDTARSIAARIATALGGRGVYGVELFVKGDDVYFSEVSPRLHDTGMVTLGTQRFSEFDLHARAILGLPIDTTLISPGASAVIRCEDKHDGDIEYAGVNKAMAVEETNIYLFGKPRALARRRMGVAVATAENIDQARQRAEEAAGYIEVRPTVFAEGGQ.

Residue 25-26 (EL) participates in N(1)-(5-phospho-beta-D-ribosyl)glycinamide binding. Residues Arg118, Lys159, 164–169 (SSGAGQ), 199–202 (EQYI), and Glu207 contribute to the ATP site. In terms of domain architecture, ATP-grasp spans 123-318 (TFAHDKLGLP…EFDLHARAIL (196 aa)). 2 residues coordinate Mg(2+): Glu277 and Glu289. Residues Asp296, Lys366, and 373 to 374 (RR) contribute to the N(1)-(5-phospho-beta-D-ribosyl)glycinamide site.

It belongs to the PurK/PurT family. As to quaternary structure, homodimer.

The catalysed reaction is N(1)-(5-phospho-beta-D-ribosyl)glycinamide + formate + ATP = N(2)-formyl-N(1)-(5-phospho-beta-D-ribosyl)glycinamide + ADP + phosphate + H(+). Its pathway is purine metabolism; IMP biosynthesis via de novo pathway; N(2)-formyl-N(1)-(5-phospho-D-ribosyl)glycinamide from N(1)-(5-phospho-D-ribosyl)glycinamide (formate route): step 1/1. Functionally, involved in the de novo purine biosynthesis. Catalyzes the transfer of formate to 5-phospho-ribosyl-glycinamide (GAR), producing 5-phospho-ribosyl-N-formylglycinamide (FGAR). Formate is provided by PurU via hydrolysis of 10-formyl-tetrahydrofolate. In Corynebacterium jeikeium (strain K411), this protein is Formate-dependent phosphoribosylglycinamide formyltransferase.